The following is a 162-amino-acid chain: MKILKPYMRNTSISCYLCFLLNSHFLTEAGIHVFILGCVSVGLPKTEANWIDVRYDLEKIESLIQSIHIDTTLYTDSDFHPSCKVTAMNCFLLELQVILHEYSNMTLNETVRNVLYLANSTLSSNKNVAESGCKECEELEEKTFTEFLQSFIRIVQMFINTS.

An N-terminal signal peptide occupies residues 1 to 29 (MKILKPYMRNTSISCYLCFLLNSHFLTEA). Residues 30–48 (GIHVFILGCVSVGLPKTEA) constitute a propeptide that is removed on maturation. Cystine bridges form between C83/C133 and C90/C136. Residues N104, N108, and N119 are each glycosylated (N-linked (GlcNAc...) asparagine).

It belongs to the IL-15/IL-21 family.

Its subcellular location is the secreted. In terms of biological role, cytokine that plays a major role in the development of inflammatory and protective immune responses to microbial invaders and parasites by modulating immune cells of both the innate and adaptive immune systems. Stimulates the proliferation and activation of natural killer cells, T-cells and B-cells and promotes the secretion of several cytokines. In monocytes, induces the production of IL8 and monocyte chemotactic protein 1/CCL2, two chemokines that attract neutrophils and monocytes respectively to sites of infection. Unlike most cytokines, which are secreted in soluble form, IL15 is expressed in association with its high affinity IL15RA on the surface of IL15-producing cells and delivers signals to target cells that express IL2RB and IL2RG receptor subunits. Binding to its receptor triggers the phosphorylation of JAK1 and JAK3 and the recruitment and subsequent phosphorylation of signal transducer and activator of transcription-3/STAT3 and STAT5. In mast cells, induces the rapid tyrosine phosphorylation of STAT6 and thereby controls mast cell survival and release of cytokines such as IL4. In Mus musculus (Mouse), this protein is Interleukin-15 (Il15).